A 308-amino-acid polypeptide reads, in one-letter code: Ornithine carbamoyltransferase (308 aa).

Residues 55-58 (STRT), Q82, R106, and 133-136 (HPCQ) contribute to the carbamoyl phosphate site. L-ornithine-binding positions include N164, D227, and 231–232 (SM). Residues 267–268 (CL) and R295 contribute to the carbamoyl phosphate site.

It belongs to the aspartate/ornithine carbamoyltransferase superfamily. OTCase family.

It is found in the cytoplasm. The enzyme catalyses carbamoyl phosphate + L-ornithine = L-citrulline + phosphate + H(+). It functions in the pathway amino-acid biosynthesis; L-arginine biosynthesis; L-arginine from L-ornithine and carbamoyl phosphate: step 1/3. Functionally, reversibly catalyzes the transfer of the carbamoyl group from carbamoyl phosphate (CP) to the N(epsilon) atom of ornithine (ORN) to produce L-citrulline. The polypeptide is Ornithine carbamoyltransferase (Prochlorococcus marinus (strain MIT 9312)).